The primary structure comprises 863 residues: DNA replication licensing factor MCM4 (863 aa).

Positions 1-10 (MSSPASTPSR) are enriched in low complexity. 2 disordered regions span residues 1 to 60 (MSSP…VDLQ) and 91 to 126 (TYGTPSSRVEGTPRSGVRGTPVRQRPDLGSAQKGLQ). The residue at position 2 (Ser2) is an N-acetylserine. Residue Ser6 is modified to Phosphoserine; by CDC7. Phosphothreonine occurs at positions 7 and 19. Ser26, Ser31, Ser32, and Ser34 each carry phosphoserine. Thr102 carries the post-translational modification Phosphothreonine. Ser105 carries the post-translational modification Phosphoserine. A Phosphothreonine modification is found at Thr110. A phosphoserine mark is found at Ser120, Ser131, Ser142, and Ser145. An N6-acetyllysine modification is found at Lys220. Residue Lys439 forms a Glycyl lysine isopeptide (Lys-Gly) (interchain with G-Cter in SUMO2) linkage. Residue Lys450 is modified to N6-acetyllysine. Positions 458–667 (IYERLASALA…YDRRLAHHLV (210 aa)) constitute an MCM domain. ATP is bound by residues Tyr471, Arg497, Lys516, Ser517, Asn618, Arg643, Arg732, and Glu735. The Arginine finger signature appears at 642-645 (SRFD). Residue Lys798 forms a Glycyl lysine isopeptide (Lys-Gly) (interchain with G-Cter in SUMO2) linkage. Lys858 bears the N6-acetyllysine mark.

Belongs to the MCM family. Component of the MCM2-7 complex. The complex forms a toroidal hexameric ring with the proposed subunit order MCM2-MCM6-MCM4-MCM7-MCM3-MCM5. Component of the CMG helicase complex, a hexameric ring of related MCM2-7 subunits stabilized by CDC45 and the tetrameric GINS complex. Interacts with MCMBP. Post-translationally, sumoylated; SUMO2 modified in response to stress caused by inhibition of proteasome activity (in vitro).

The protein resides in the nucleus. The protein localises to the chromosome. It carries out the reaction ATP + H2O = ADP + phosphate + H(+). Functionally, acts as a component of the MCM2-7 complex (MCM complex) which is the replicative helicase essential for 'once per cell cycle' DNA replication initiation and elongation in eukaryotic cells. Core component of CDC45-MCM-GINS (CMG) helicase, the molecular machine that unwinds template DNA during replication, and around which the replisome is built. The active ATPase sites in the MCM2-7 ring are formed through the interaction surfaces of two neighboring subunits such that a critical structure of a conserved arginine finger motif is provided in trans relative to the ATP-binding site of the Walker A box of the adjacent subunit. The six ATPase active sites, however, are likely to contribute differentially to the complex helicase activity. The sequence is that of DNA replication licensing factor MCM4 from Homo sapiens (Human).